A 758-amino-acid polypeptide reads, in one-letter code: Relaxin receptor 1 (758 aa).

Over 1-409 the chain is Extracellular; that stretch reads MTSGPFFFCI…ENLLASIIQR (409 aa). The LDL-receptor class A domain maps to 26 to 63; the sequence is SCPLGSFPCGNMSRCLPQLLHCNGVDDCGNRADEDHCG. 3 disulfide bridges follow: cysteine 27–cysteine 40, cysteine 34–cysteine 53, and cysteine 47–cysteine 62. Asparagine 36 is a glycosylation site (N-linked (GlcNAc...) asparagine). The Ca(2+) site is built by leucine 45, asparagine 48, valine 50, aspartate 52, aspartate 58, and glutamate 59. N-linked (GlcNAc...) asparagine glycosylation is present at asparagine 127. LRR repeat units lie at residues 127–148, 151–172, 175–196, 199–220, 223–244, 248–269, 272–293, 296–317, 320–341, and 344–365; these read NVTVMSLQRNFIRTLPPNGFRK, ELQKLCLQNNRIHSVSVSAFRG, SLTKLYLSHNRITFLKPGVFED, RLEWLIIEDNHLSRISPLTFYG, SLILLVLMNNALTRLPDKPLCQ, RLHWLDFEGNRIHNLRNLTFIS, NLTVLVMRKNKINYLNEHAFTH, KLDELDLGSNKIENLPPNIFKD, ELSQLNISYNPIQKIEVNQFDC, and KLKSLSLEGIEISNIQQRMFRP. N-linked (GlcNAc...) asparagine glycans are attached at residues asparagine 264 and asparagine 272. A glycan (N-linked (GlcNAc...) asparagine) is linked at asparagine 325. Asparagine 368 carries an N-linked (GlcNAc...) asparagine glycan. The chain crosses the membrane as a helical span at residues 410–430; that stretch reads VFVWVVSAITCFGNIFVICMR. The Cytoplasmic segment spans residues 431 to 443; that stretch reads PYIRSENKLHAMS. The chain crosses the membrane as a helical span at residues 444–464; that stretch reads IISLCCADCLMGVYLFVIGAF. Residues 465–486 lie on the Extracellular side of the membrane; it reads DLKFRGEYNKHAQPWMESVHCQ. A disulfide bridge connects residues cysteine 485 and cysteine 563. Residues 487–507 traverse the membrane as a helical segment; the sequence is FMGSLAILSTEVSVLLLTFLT. Residues 508–527 lie on the Cytoplasmic side of the membrane; the sequence is LEKYICIVYPFRCLRPRKCR. A helical transmembrane segment spans residues 528–548; the sequence is TITVLIFIWIIGFIVAFAPLG. Residues 549-577 are Extracellular-facing; sequence NKEFFKNYYGTNGVCFPLHSEDTGSTGAQ. Residues 578 to 598 traverse the membrane as a helical segment; that stretch reads IYSVVIFLGINLVAFIIIVFS. Residues 599-629 are Cytoplasmic-facing; it reads YGSMFYSVHQSSVTVTEIQKQVKKEVVLAKR. The chain crosses the membrane as a helical span at residues 630 to 650; sequence FFFIVFTDALCWIPIFILKFL. A topological domain (extracellular) is located at residue serine 651. Residues 652 to 672 traverse the membrane as a helical segment; that stretch reads LLQVEIPDSITSWVVIFILPI. Topologically, residues 673 to 758 are cytoplasmic; the sequence is NSALNPIIYT…SQSSRLNSYS (86 aa).

This sequence belongs to the G-protein coupled receptor 1 family. Interacts with C1QTNF8.

Its subcellular location is the cell membrane. Functionally, receptor for relaxins. The activity of this receptor is mediated by G proteins leading to stimulation of adenylate cyclase and an increase of cAMP. Binding of the ligand may also activate a tyrosine kinase pathway that inhibits the activity of a phosphodiesterase that degrades cAMP. This chain is Relaxin receptor 1 (Rxfp1), found in Mus musculus (Mouse).